Consider the following 600-residue polypeptide: Elongation factor 4 (600 aa).

A tr-type G domain is found at 4-186 (SKIRNFSIIA…AIVNKIPAPY (183 aa)). Residues 16–21 (DHGKST) and 133–136 (NKVD) each bind GTP.

Belongs to the TRAFAC class translation factor GTPase superfamily. Classic translation factor GTPase family. LepA subfamily.

The protein resides in the cell membrane. It carries out the reaction GTP + H2O = GDP + phosphate + H(+). Its function is as follows. Required for accurate and efficient protein synthesis under certain stress conditions. May act as a fidelity factor of the translation reaction, by catalyzing a one-codon backward translocation of tRNAs on improperly translocated ribosomes. Back-translocation proceeds from a post-translocation (POST) complex to a pre-translocation (PRE) complex, thus giving elongation factor G a second chance to translocate the tRNAs correctly. Binds to ribosomes in a GTP-dependent manner. This is Elongation factor 4 from Mesoplasma florum (strain ATCC 33453 / NBRC 100688 / NCTC 11704 / L1) (Acholeplasma florum).